Here is a 294-residue protein sequence, read N- to C-terminus: HTH-type transcriptional activator AmpR (294 aa).

One can recognise an HTH lysR-type domain in the interval 6–63 (IPLNSLRAFEAAARQLSFTKAAIELNVTHAAISQQVKALEQRLNCRLFIRISRGLVLT). The segment at residues 23–42 (FTKAAIELNVTHAAISQQVK) is a DNA-binding region (H-T-H motif).

Belongs to the LysR transcriptional regulatory family.

It is found in the cytoplasm. Its function is as follows. This protein is a positive regulator of gene expression of beta-lactamase (AmpC). The polypeptide is HTH-type transcriptional activator AmpR (ampR) (Yersinia enterocolitica).